Here is a 119-residue protein sequence, read N- to C-terminus: DNA-binding protein inhibitor ID-3 (119 aa).

Positions Arg-28–Leu-80 constitute a bHLH domain.

In terms of assembly, homodimer, and heterodimer with other HLH proteins. Interacts with COPS5 and COPS7A. Interacts with IFI204. Interacts with GATA4 and NKX2-5. Interacts with ANKRD2; both proteins cooperate in myoblast differentiation. Interacts with CLOCK and BMAL1. Phosphorylated in vitro by CDC2 and PKC.

The protein resides in the nucleus. Its function is as follows. Transcriptional regulator (lacking a basic DNA binding domain) which negatively regulates the basic helix-loop-helix (bHLH) transcription factors by forming heterodimers and inhibiting their DNA binding and transcriptional activity. Implicated in regulating a variety of cellular processes, including cellular growth, senescence, differentiation, apoptosis, angiogenesis, and neoplastic transformation. Involved in myogenesis by inhibiting skeletal muscle and cardiac myocyte differentiation and promoting muscle precursor cells proliferation. Inhibits the binding of E2A-containing protein complexes to muscle creatine kinase E-box enhancer. Regulates the circadian clock by repressing the transcriptional activator activity of the CLOCK-BMAL1 heterodimer. The chain is DNA-binding protein inhibitor ID-3 (Id3) from Rattus norvegicus (Rat).